We begin with the raw amino-acid sequence, 681 residues long: Phenylalanine--tRNA ligase beta subunit (681 aa).

A B5 domain is found at 288–363 (PARETVLLRP…RIHGYDQIPE (76 aa)). Residues Asp-341, Asp-347, Glu-350, and Glu-351 each coordinate Mg(2+). The region spanning 586 to 681 (SSFPSIQRDL…EKQLEAVLLR (96 aa)) is the FDX-ACB domain.

The protein belongs to the phenylalanyl-tRNA synthetase beta subunit family. Type 1 subfamily. Tetramer of two alpha and two beta subunits. It depends on Mg(2+) as a cofactor.

Its subcellular location is the cytoplasm. The catalysed reaction is tRNA(Phe) + L-phenylalanine + ATP = L-phenylalanyl-tRNA(Phe) + AMP + diphosphate + H(+). In Rhodopirellula baltica (strain DSM 10527 / NCIMB 13988 / SH1), this protein is Phenylalanine--tRNA ligase beta subunit.